The chain runs to 426 residues: Dihydropyrimidine dehydrogenase (NADP(+)), chloroplastic (426 aa).

The N-terminal 44 residues, 1-44 (MASMSFALNRFSGLSSKTTLSADFDPSSRRSFLPPTRVGLKISS), are a transit peptide targeting the chloroplast. The residue at position 45 (A45) is an N-acetylalanine. Substrate contacts are provided by residues N129 and 188–190 (NFS). C191 (nucleophile) is an active-site residue. Residue 256–257 (NT) coordinates substrate. The tract at residues 395-414 (VEQRKAEKRGLKSDKDWTGD) is disordered.

This sequence belongs to the dihydropyrimidine dehydrogenase family. Expressed in roots, leaves, stems, siliques and flowers. Highly expressed ion dry seeds.

It is found in the plastid. The protein localises to the chloroplast. The enzyme catalyses 5,6-dihydrouracil + NADP(+) = uracil + NADPH + H(+). It participates in amino-acid biosynthesis; beta-alanine biosynthesis. In terms of biological role, involved in pyrimidine base degradation. Catalyzes the reduction of uracil to 5,6-dihydrouracil (DHU) by using NADH as a specific cosubstrate and the reduction of thymine to 5,6-dihydrothymine (DHT). Involved in the recycling of nitrogen from nucleobases to general nitrogen metabolism. This is Dihydropyrimidine dehydrogenase (NADP(+)), chloroplastic from Arabidopsis thaliana (Mouse-ear cress).